Reading from the N-terminus, the 392-residue chain is Alanine--glyoxylate aminotransferase (392 aa).

Lys209 is modified (N6-(pyridoxal phosphate)lysine). Lys225 is subject to N6-acetyllysine; alternate. Lys225 is modified (N6-succinyllysine; alternate). N6-acetyllysine occurs at positions 234 and 312. Arg360 contacts substrate. The short motif at 390-392 (KKL) is the Microbody targeting signal element.

It belongs to the class-V pyridoxal-phosphate-dependent aminotransferase family. In terms of assembly, homodimer. The cofactor is pyridoxal 5'-phosphate.

It is found in the peroxisome. The catalysed reaction is L-serine + pyruvate = 3-hydroxypyruvate + L-alanine. It carries out the reaction glyoxylate + L-alanine = glycine + pyruvate. Its function is as follows. Peroxisomal aminotransferase that catalyzes the transamination of glyoxylate to glycine and contributes to the glyoxylate detoxification. Also catalyzes the transamination between L-serine and pyruvate and contributes to gluconeogenesis from the L-serine metabolism. In Pongo abelii (Sumatran orangutan), this protein is Alanine--glyoxylate aminotransferase.